The following is a 173-amino-acid chain: Propanediol dehydratase small subunit (173 aa).

It belongs to the diol/glycerol dehydratase small subunit family. As to quaternary structure, the propanediol dehydratase enzyme is a heterotrimeric complex composed of a large (PduC), a medium (PduD) and a small (PduE) subunit. Requires adenosylcob(III)alamin as cofactor.

It is found in the bacterial microcompartment. The catalysed reaction is propane-1,2-diol = propanal + H2O. It functions in the pathway polyol metabolism; 1,2-propanediol degradation. Inhibited by glycerol. In terms of biological role, part of the PduCDE complex that catalyzes the dehydration of 1,2-propanediol (1,2-PD) to propionaldehyde. Required for S.typhimurium growth on 1,2-PD as the sole carbon and energy source. Localized in the bacterial microcompartment (BMC) dedicated to 1,2-PD degradation. Functionally, the 1,2-PD-specific bacterial microcompartment (BMC) concentrates low levels of 1,2-PD catabolic enzymes, concentrates volatile reaction intermediates thus enhancing pathway flux and keeps the level of toxic, mutagenic propionaldehyde low. This Salmonella typhimurium (strain LT2 / SGSC1412 / ATCC 700720) protein is Propanediol dehydratase small subunit.